The sequence spans 154 residues: Movement protein (154 aa).

Disordered regions lie at residues 83–103 (SSPTTFTRSQTSRLSLSHTRP) and 123–154 (WVATLTHSPSQNQQPKPSPPNRLTGRNSGRVR).

This sequence belongs to the luteoviruses movement protein family.

Transports viral genome to neighboring plant cells directly through plasmosdesmata, without any budding. The movement protein allows efficient cell to cell propagation, by bypassing the host cell wall barrier. The protein is Movement protein of Barley yellow dwarf virus (isolate MAV) (BYDV).